Here is a 238-residue protein sequence, read N- to C-terminus: 1-(5-phosphoribosyl)-5-[(5-phosphoribosylamino)methylideneamino] imidazole-4-carboxamide isomerase (238 aa).

The active-site Proton acceptor is Asp8. The Proton donor role is filled by Asp129.

Belongs to the HisA/HisF family.

The protein localises to the cytoplasm. It carries out the reaction 1-(5-phospho-beta-D-ribosyl)-5-[(5-phospho-beta-D-ribosylamino)methylideneamino]imidazole-4-carboxamide = 5-[(5-phospho-1-deoxy-D-ribulos-1-ylimino)methylamino]-1-(5-phospho-beta-D-ribosyl)imidazole-4-carboxamide. It participates in amino-acid biosynthesis; L-histidine biosynthesis; L-histidine from 5-phospho-alpha-D-ribose 1-diphosphate: step 4/9. This chain is 1-(5-phosphoribosyl)-5-[(5-phosphoribosylamino)methylideneamino] imidazole-4-carboxamide isomerase, found in Paracoccus denitrificans (strain Pd 1222).